A 1818-amino-acid polypeptide reads, in one-letter code: U3 small nucleolar RNA-associated protein 10 (1818 aa).

A helical transmembrane segment spans residues 568 to 588 (TDFYLLIPLILLALFDNSKLI). The stretch at 1778–1816 (LVPYIAELLEDDDEEVEMEVRRGLVRVIENVLGEPLDRY) is one HEAT repeat.

It belongs to the HEATR1/UTP10 family. As to quaternary structure, component of the ribosomal small subunit (SSU) processome.

The protein localises to the nucleus. It is found in the nucleolus. It localises to the membrane. Its function is as follows. Involved in nucleolar processing of pre-18S ribosomal RNA. Involved in ribosome biosynthesis. This Candida albicans (strain SC5314 / ATCC MYA-2876) (Yeast) protein is U3 small nucleolar RNA-associated protein 10.